Consider the following 430-residue polypeptide: Phosphomethylpyrimidine synthase (430 aa).

Residues Asn-67, Met-96, Tyr-125, His-161, 183-185, 224-227, and Glu-263 each bind substrate; these read SRG and DALR. Residue His-267 participates in Zn(2+) binding. Tyr-290 contributes to the substrate binding site. His-331 serves as a coordination point for Zn(2+). The [4Fe-4S] cluster site is built by Cys-406, Cys-409, and Cys-413.

It belongs to the ThiC family. Homodimer. It depends on [4Fe-4S] cluster as a cofactor.

It catalyses the reaction 5-amino-1-(5-phospho-beta-D-ribosyl)imidazole + S-adenosyl-L-methionine = 4-amino-2-methyl-5-(phosphooxymethyl)pyrimidine + CO + 5'-deoxyadenosine + formate + L-methionine + 3 H(+). It participates in cofactor biosynthesis; thiamine diphosphate biosynthesis. Functionally, catalyzes the synthesis of the hydroxymethylpyrimidine phosphate (HMP-P) moiety of thiamine from aminoimidazole ribotide (AIR) in a radical S-adenosyl-L-methionine (SAM)-dependent reaction. This chain is Phosphomethylpyrimidine synthase, found in Campylobacter jejuni subsp. jejuni serotype O:23/36 (strain 81-176).